The following is a 593-amino-acid chain: Tyrosine-protein phosphatase non-receptor type 11 (593 aa).

Threonine 2 carries the post-translational modification N-acetylthreonine. 2 consecutive SH2 domains span residues tryptophan 6–leucine 102 and tryptophan 112–leucine 216. Phosphotyrosine is present on residues tyrosine 62 and tyrosine 66. Residues phenylalanine 247–alanine 517 form the Tyrosine-protein phosphatase domain. Substrate is bound by residues aspartate 425, cysteine 459 to arginine 465, and glutamine 506. Residue cysteine 459 is the Phosphocysteine intermediate of the active site. Phosphotyrosine; by PDGFR is present on residues tyrosine 542 and tyrosine 580.

This sequence belongs to the protein-tyrosine phosphatase family. Non-receptor class 2 subfamily. Interacts with phosphorylated SIT1, LIME1, BCAR3 and MZPL1. Interacts with FCRL4, FCRL6, ANKHD1, SHB, INPP5D/SHIP1 and CD84. Interacts with MILR1 (tyrosine-phosphorylated). Interacts with FLT1 (tyrosine-phosphorylated), FLT3 (tyrosine-phosphorylated), FLT4 (tyrosine-phosphorylated), KIT and GRB2. Interacts with PTPNS1. Interacts with KIR2DL1; the interaction is enhanced by ARRB2. Interacts (via SH2 domain) with TEK/TIE2 (tyrosine phosphorylated). Interacts with GAB2. Interacts with TERT; the interaction retains TERT in the nucleus. Interacts with PECAM1 and FER. Interacts with EPHA2 (activated); participates in PTK2/FAK1 dephosphorylation in EPHA2 downstream signaling. Interacts with PDGFRA (tyrosine phosphorylated). Interacts with PDGFRB (tyrosine phosphorylated); this interaction increases the PTPN11 phosphatase activity. Interacts with ROS1; this mediates PTPN11 phosphorylation. Interacts with CEACAM1 (via cytoplasmic domain); this interaction depends on the monomer/dimer equilibrium and is phosphorylation-dependent. Interacts with MPIG6B (via ITIM motif). Interacts with SIGLEC10. Interacts with CLEC12B (via ITIM motif); this interaction triggers dephosphorylation and activation of PTPN11. Interacts (via SH2 domains) with NEDD9/CAS-L; the interaction is enhanced when NEDD9/CAS-L is tyrosine phosphorylated. In terms of processing, phosphorylated on Tyr-542 and Tyr-580 upon receptor protein tyrosine kinase activation; which creates a binding site for GRB2 and other SH2-containing proteins. Phosphorylated upon activation of the receptor-type kinase FLT3. Phosphorylated upon activation of the receptor-type kinase PDGFRA. Phosphorylated by activated PDGFRB. Expressed in brain, muscle and lung.

Its subcellular location is the cytoplasm. It carries out the reaction O-phospho-L-tyrosyl-[protein] + H2O = L-tyrosyl-[protein] + phosphate. Its activity is regulated as follows. Inhibited by orthovanadate, molybdate and spermidine. Acts downstream of various receptor and cytoplasmic protein tyrosine kinases to participate in the signal transduction from the cell surface to the nucleus. Positively regulates MAPK signal transduction pathway. Dephosphorylates GAB1, ARHGAP35 and EGFR. Dephosphorylates ROCK2 at 'Tyr-722' resulting in stimulation of its RhoA binding activity. Dephosphorylates CDC73. Dephosphorylates SOX9 on tyrosine residues, leading to inactivate SOX9 and promote ossification. Dephosphorylates tyrosine-phosphorylated NEDD9/CAS-L. This Rattus norvegicus (Rat) protein is Tyrosine-protein phosphatase non-receptor type 11 (Ptpn11).